Here is a 365-residue protein sequence, read N- to C-terminus: UDP-N-acetylglucosamine--N-acetylmuramyl-(pentapeptide) pyrophosphoryl-undecaprenol N-acetylglucosamine transferase (365 aa).

Residues 17–19 (TGG), N129, R167, S194, I250, 269–274 (ALTVSE), and Q295 contribute to the UDP-N-acetyl-alpha-D-glucosamine site.

This sequence belongs to the glycosyltransferase 28 family. MurG subfamily.

The protein resides in the cell inner membrane. The enzyme catalyses di-trans,octa-cis-undecaprenyl diphospho-N-acetyl-alpha-D-muramoyl-L-alanyl-D-glutamyl-meso-2,6-diaminopimeloyl-D-alanyl-D-alanine + UDP-N-acetyl-alpha-D-glucosamine = di-trans,octa-cis-undecaprenyl diphospho-[N-acetyl-alpha-D-glucosaminyl-(1-&gt;4)]-N-acetyl-alpha-D-muramoyl-L-alanyl-D-glutamyl-meso-2,6-diaminopimeloyl-D-alanyl-D-alanine + UDP + H(+). It participates in cell wall biogenesis; peptidoglycan biosynthesis. Cell wall formation. Catalyzes the transfer of a GlcNAc subunit on undecaprenyl-pyrophosphoryl-MurNAc-pentapeptide (lipid intermediate I) to form undecaprenyl-pyrophosphoryl-MurNAc-(pentapeptide)GlcNAc (lipid intermediate II). The sequence is that of UDP-N-acetylglucosamine--N-acetylmuramyl-(pentapeptide) pyrophosphoryl-undecaprenol N-acetylglucosamine transferase from Shewanella sediminis (strain HAW-EB3).